The primary structure comprises 396 residues: Probable circularly permuted 1,3-beta-glucanase YJL171C (396 aa).

The signal sequence occupies residues 1–19 (MLQSIVLSVCMFMLHTVAA). Asn51, Asn99, Asn122, Asn146, Asn174, Asn219, and Asn249 each carry an N-linked (GlcNAc...) asparagine glycan. The ExDxxE motif motif lies at 259-264 (EYDIFE). Residues Asn267, Asn300, Asn328, and Asn346 are each glycosylated (N-linked (GlcNAc...) asparagine). Asn368 is lipidated: GPI-anchor amidated asparagine. Residues 369–396 (GVALTKMQNGVWYYILAIFTAFTQVVLI) constitute a propeptide, removed in mature form.

It belongs to the PGA52 family. Extensively N-glycosylated.

Its subcellular location is the cell membrane. The enzyme catalyses Hydrolysis of (1-&gt;3)-beta-D-glucosidic linkages in (1-&gt;3)-beta-D-glucans.. Functionally, probable circularly permuted 1,3-beta-glucanase involved in cell wall modification through beta-1,3-glucan network alterations such as increased branching or remodeling. This chain is Probable circularly permuted 1,3-beta-glucanase YJL171C (TOH1), found in Saccharomyces cerevisiae (strain ATCC 204508 / S288c) (Baker's yeast).